Here is a 474-residue protein sequence, read N- to C-terminus: 3-isopropylmalate dehydratase large subunit (474 aa).

[4Fe-4S] cluster-binding residues include cysteine 355, cysteine 415, and cysteine 418.

This sequence belongs to the aconitase/IPM isomerase family. LeuC type 1 subfamily. As to quaternary structure, heterodimer of LeuC and LeuD. [4Fe-4S] cluster is required as a cofactor.

It catalyses the reaction (2R,3S)-3-isopropylmalate = (2S)-2-isopropylmalate. Its pathway is amino-acid biosynthesis; L-leucine biosynthesis; L-leucine from 3-methyl-2-oxobutanoate: step 2/4. Its function is as follows. Catalyzes the isomerization between 2-isopropylmalate and 3-isopropylmalate, via the formation of 2-isopropylmaleate. In Shewanella sp. (strain MR-7), this protein is 3-isopropylmalate dehydratase large subunit.